We begin with the raw amino-acid sequence, 123 residues long: Ribosome-binding factor A (123 aa).

The protein belongs to the RbfA family. In terms of assembly, monomer. Binds 30S ribosomal subunits, but not 50S ribosomal subunits or 70S ribosomes.

The protein localises to the cytoplasm. Its function is as follows. One of several proteins that assist in the late maturation steps of the functional core of the 30S ribosomal subunit. Associates with free 30S ribosomal subunits (but not with 30S subunits that are part of 70S ribosomes or polysomes). Required for efficient processing of 16S rRNA. May interact with the 5'-terminal helix region of 16S rRNA. In Desulfatibacillum aliphaticivorans, this protein is Ribosome-binding factor A.